Consider the following 296-residue polypeptide: Calponin-2 (296 aa).

S2 is subject to N-acetylserine. 2 positions are modified to N6-acetyllysine: K8 and K25. The Calponin-homology (CH) domain occupies 28 to 132 (PQKEAELRSW…SLLALAGKAK (105 aa)). A Phosphoserine modification is found at S138. Calponin-like repeat units follow at residues 166–191 (IGLQ…RHLY), 206–231 (ISLQ…RHIY), and 245–269 (MSLQ…RQIY). The disordered stretch occupies residues 275 to 296 (PQGPAADGAPAAAGDCPGPGES).

Belongs to the calponin family. In terms of tissue distribution, smooth muscle, and tissues containing significant amounts of smooth muscle.

Its function is as follows. Thin filament-associated protein that is implicated in the regulation and modulation of smooth muscle contraction. It is capable of binding to actin, calmodulin and tropomyosin. The interaction of calponin with actin inhibits the actomyosin Mg-ATPase activity. This chain is Calponin-2 (CNN2), found in Sus scrofa (Pig).